The chain runs to 263 residues: Palmitoyltransferase ZDHHC21 (263 aa).

At 1–4 (MKMR) the chain is on the cytoplasmic side. Residues 5–25 (LHFVVDPMGWFCMSMVFFVWI) traverse the membrane as a helical segment. Residues 26-44 (YNSFLIPKLVLLPHYAEGH) lie on the Extracellular side of the membrane. Residues 45-65 (ITAEPVICYYLASLLCFSALF) traverse the membrane as a helical segment. Topologically, residues 66–131 (RASTTDPGKL…WINNCVGEDN (66 aa)) are cytoplasmic. Residues 90–140 (ELCNKCNMMRPKRSHHCSRCGHCVRRMDHHCPWINNCVGEDNHWLFLQLCF) enclose the DHHC domain. The active-site S-palmitoyl cysteine intermediate is Cys120. Residues 132-152 (HWLFLQLCFYTQVLSFYTLVL) traverse the membrane as a helical segment. The Extracellular portion of the chain corresponds to 153–181 (DFCQYYYFLPLSSVDQADFAVHHELALLR). Residues 182-202 (VSCFMGLIMFGGISSLFYTQV) form a helical membrane-spanning segment. At 203–263 (KGILTDTTTI…KLNLTIRSHV (61 aa)) the chain is on the cytoplasmic side.

The protein belongs to the DHHC palmitoyltransferase family.

The protein resides in the golgi apparatus membrane. It is found in the golgi apparatus. The protein localises to the cis-Golgi network membrane. Its subcellular location is the cell membrane. The enzyme catalyses L-cysteinyl-[protein] + hexadecanoyl-CoA = S-hexadecanoyl-L-cysteinyl-[protein] + CoA. Palmitoyltransferase that catalyzes the addition of palmitate onto various protein substrates. In Danio rerio (Zebrafish), this protein is Palmitoyltransferase ZDHHC21.